The following is a 381-amino-acid chain: uncharacterized protein (381 aa).

2 helical membrane passes run 22–42 (GVLLTLAAVAVVASIGTYLTA) and 246–266 (LIPENVHWTIWQLWLVVLLVA).

It is found in the cell membrane. This is an uncharacterized protein from Mycobacterium tuberculosis (strain ATCC 25618 / H37Rv).